The following is a 113-amino-acid chain: Large ribosomal subunit protein bL19 (113 aa).

It belongs to the bacterial ribosomal protein bL19 family.

Its function is as follows. This protein is located at the 30S-50S ribosomal subunit interface and may play a role in the structure and function of the aminoacyl-tRNA binding site. This chain is Large ribosomal subunit protein bL19, found in Mycolicibacterium smegmatis (strain ATCC 700084 / mc(2)155) (Mycobacterium smegmatis).